The chain runs to 274 residues: Bis(5'-nucleosyl)-tetraphosphatase, symmetrical (274 aa).

The protein belongs to the Ap4A hydrolase family.

The enzyme catalyses P(1),P(4)-bis(5'-adenosyl) tetraphosphate + H2O = 2 ADP + 2 H(+). Its function is as follows. Hydrolyzes diadenosine 5',5'''-P1,P4-tetraphosphate to yield ADP. The protein is Bis(5'-nucleosyl)-tetraphosphatase, symmetrical of Buchnera aphidicola subsp. Acyrthosiphon pisum (strain 5A).